A 364-amino-acid chain; its full sequence is Fructose-bisphosphate aldolase A (364 aa).

Tyrosine 5 bears the Phosphotyrosine mark. Phosphothreonine is present on threonine 9. Phosphoserine occurs at positions 36 and 39. Lysine 42 carries the post-translational modification N6-acetyllysine; alternate. Residue lysine 42 forms a Glycyl lysine isopeptide (Lys-Gly) (interchain with G-Cter in SUMO1); alternate linkage. Lysine 42 is covalently cross-linked (Glycyl lysine isopeptide (Lys-Gly) (interchain with G-Cter in SUMO2); alternate). A beta-D-fructose 1,6-bisphosphate-binding site is contributed by arginine 43. Residue serine 46 is modified to Phosphoserine. The residue at position 99 (lysine 99) is an N6-(2-hydroxyisobutyryl)lysine. Lysine 108 is subject to N6-acetyllysine. N6-acetyllysine; alternate is present on lysine 111. The residue at position 111 (lysine 111) is an N6-malonyllysine; alternate. At serine 132 the chain carries Phosphoserine. Lysine 147 carries the post-translational modification N6-(2-hydroxyisobutyryl)lysine. The active-site Proton acceptor is the glutamate 188. Lysine 230 serves as the catalytic Schiff-base intermediate with dihydroxyacetone-P. Serine 272 is modified (phosphoserine). Beta-D-fructose 1,6-bisphosphate-binding positions include 272-274 (SGG), serine 301, and arginine 304. Lysine 312 carries the post-translational modification N6-malonyllysine. Residue lysine 330 is modified to N6-acetyllysine.

It belongs to the class I fructose-bisphosphate aldolase family. As to quaternary structure, homotetramer. Interacts with SNX9 and WAS. Interacts with FBP2; the interaction blocks FBP2 inhibition by physiological concentrations of AMP and reduces inhibition by Ca(2+). In terms of tissue distribution, expressed in muscle, brain and hepatoma cells.

The protein resides in the cytoplasm. It localises to the myofibril. The protein localises to the sarcomere. Its subcellular location is the i band. It is found in the m line. The catalysed reaction is beta-D-fructose 1,6-bisphosphate = D-glyceraldehyde 3-phosphate + dihydroxyacetone phosphate. Its pathway is carbohydrate degradation; glycolysis; D-glyceraldehyde 3-phosphate and glycerone phosphate from D-glucose: step 4/4. Its function is as follows. Catalyzes the reversible conversion of beta-D-fructose 1,6-bisphosphate (FBP) into two triose phosphate and plays a key role in glycolysis and gluconeogenesis. In addition, may also function as scaffolding protein. In Rattus norvegicus (Rat), this protein is Fructose-bisphosphate aldolase A (Aldoa).